Here is a 152-residue protein sequence, read N- to C-terminus: Clitocypin-4/-3 (152 aa).

It belongs to the protease inhibitor I48 family. In terms of assembly, homodimer.

Functionally, binds and inhibits cysteine proteinases. Inhibits most strongly papain and cathepsin L, more weakly bromelain and cathepsin B while it is completely ineffective against cathepsin H. This is Clitocypin-4/-3 (clt4) from Clitocybe nebularis (Clouded agaric).